The primary structure comprises 267 residues: Outer membrane protein assembly factor BamD (267 aa).

The signal sequence occupies residues 1–16; sequence MKKILLTVSLGLALSA. Cysteine 17 carries N-palmitoyl cysteine lipidation. Cysteine 17 carries S-diacylglycerol cysteine lipidation.

It belongs to the BamD family. In terms of assembly, part of the Bam complex.

The protein localises to the cell outer membrane. Its function is as follows. Part of the outer membrane protein assembly complex, which is involved in assembly and insertion of beta-barrel proteins into the outer membrane. Required for efficient transformation of Neisseria meningitidis by species-related DNA. This is Outer membrane protein assembly factor BamD from Neisseria meningitidis serogroup A / serotype 4A (strain DSM 15465 / Z2491).